We begin with the raw amino-acid sequence, 368 residues long: uncharacterized protein (368 aa).

Belongs to the Gfo/Idh/MocA family.

This is an uncharacterized protein from Schizosaccharomyces pombe (strain 972 / ATCC 24843) (Fission yeast).